The sequence spans 433 residues: Nuclear distribution protein PAC1 (433 aa).

A LisH domain is found at 8–40 (QKDELHRAMLAYLHAAGMHNAYAALQHDAALAD). Residues 57–84 (SVIRLQKKVIDLENRNAALLAELAAAAR) are a coiled coil. 7 WD repeats span residues 103–144 (SHRA…RTLK), 146–184 (HTKA…TNVK), 188–227 (GHDH…CIKT), 230–269 (GHAE…TKME), 272–336 (GHEH…CLRT), 339–378 (GHDN…CTKT), and 381–429 (AHSH…QTIK).

Belongs to the WD repeat LIS1/nudF family. In terms of assembly, self-associates. Interacts with NDL1 and dynein.

It is found in the cytoplasm. It localises to the cytoskeleton. The protein resides in the spindle pole. Its function is as follows. Positively regulates the activity of the minus-end directed microtubule motor protein dynein. Plays a central role in positioning the mitotic spindle at the bud neck during cell division. Targets cytoplasmic dynein to microtubule plus ends, thereby promoting dynein-mediated microtubule sliding along the bud cortex and consequently the movement of the mitotic spindle to the bud neck. This is Nuclear distribution protein PAC1 from Cryptococcus neoformans var. neoformans serotype D (strain B-3501A) (Filobasidiella neoformans).